Consider the following 226-residue polypeptide: Pyridoxal 5'-phosphate synthase subunit Pdx2 (226 aa).

52–54 (GES) contributes to the L-glutamine binding site. The active-site Nucleophile is Cys-87. Residues Arg-124 and 156–157 (IR) contribute to the L-glutamine site. Residues His-199 and Glu-201 each act as charge relay system in the active site.

This sequence belongs to the glutaminase PdxT/SNO family. In terms of assembly, in the presence of PdxS, forms a dodecamer of heterodimers. Only shows activity in the heterodimer.

The catalysed reaction is aldehydo-D-ribose 5-phosphate + D-glyceraldehyde 3-phosphate + L-glutamine = pyridoxal 5'-phosphate + L-glutamate + phosphate + 3 H2O + H(+). It carries out the reaction L-glutamine + H2O = L-glutamate + NH4(+). It functions in the pathway cofactor biosynthesis; pyridoxal 5'-phosphate biosynthesis. Its function is as follows. Catalyzes the hydrolysis of glutamine to glutamate and ammonia as part of the biosynthesis of pyridoxal 5'-phosphate. The resulting ammonia molecule is channeled to the active site of PdxS. The chain is Pyridoxal 5'-phosphate synthase subunit Pdx2 from Plasmodium berghei.